The chain runs to 31 residues: Glucagon-5 (31 aa).

It belongs to the glucagon family.

Its subcellular location is the secreted. Its function is as follows. Glucagon plays a key role in glucose metabolism and homeostasis. Regulates blood glucose by increasing gluconeogenesis and decreasing glycolysis. In Huso dauricus (Kaluga sturgeon), this protein is Glucagon-5.